Consider the following 280-residue polypeptide: Ataxin-3 homolog (280 aa).

The region spanning Gly7–Glu187 is the Josephin domain. Cys20 serves as the catalytic Nucleophile. Catalysis depends on His126, which acts as the Proton acceptor. Residue Asp141 is part of the active site. Polar residues-rich tracts occupy residues Ser183–Gln194 and Asp221–Leu232. Positions Ser183 to Phe240 are disordered. One can recognise a UIM domain in the interval Met243–Ala262.

Its subcellular location is the nucleus. The catalysed reaction is Thiol-dependent hydrolysis of ester, thioester, amide, peptide and isopeptide bonds formed by the C-terminal Gly of ubiquitin (a 76-residue protein attached to proteins as an intracellular targeting signal).. In terms of biological role, interacts with key regulators of transcription and represses transcription. Acts as a histone-binding protein that regulates transcription. Acts as a deubiquitinating enzyme. This is Ataxin-3 homolog from Arabidopsis thaliana (Mouse-ear cress).